The following is a 294-amino-acid chain: P32 adhesin (294 aa).

Helical transmembrane passes span 11 to 31 (LVGVSFVFSGVIALGTGVGLT) and 66 to 86 (VVGAGAGLIVVSLLLGLGIGI). 2 repeat units span residues 172 to 193 (GGPMQPNQMGMRPGFNQMPPQM) and 194 to 214 (GGMPPNQMGMRPGFNQMPPQM). Residues 172–214 (GGPMQPNQMGMRPGFNQMPPQMGGMPPNQMGMRPGFNQMPPQM) are 2 X 22 AA repeats. A disordered region spans residues 234-294 (RPGFRPQPGG…AGFPPQNGPR (61 aa)). A compositionally biased stretch (gly residues) spans 241–256 (PGGGVPMGNKAGGGFN).

It localises to the cell projection. The protein localises to the attachment organelle membrane. Functionally, adhesin necessary for successful cytadherence and virulence. This Mycoplasmoides gallisepticum (strain R(low / passage 15 / clone 2)) (Mycoplasma gallisepticum) protein is P32 adhesin (mgc2).